Reading from the N-terminus, the 598-residue chain is Torsin-1A-interacting protein 1 (598 aa).

Topologically, residues 1–351 (MAGEGRRAEA…PQNASFVKRN (351 aa)) are nuclear. 2 disordered regions span residues 19–254 (VTPR…RSSS) and 267–314 (QNFT…IYGS). A Phosphoserine modification is found at Ser60. 2 stretches are compositionally biased toward basic and acidic residues: residues 73–101 (LVDK…EVRE) and 115–124 (RPQEAEEMKT). Residues Ser135, Ser143, Ser154, Ser156, Ser157, and Ser187 each carry the phosphoserine modification. Polar residues predominate over residues 205–214 (EATSVQQKVN). At Ser216 the chain carries Phosphoserine. At Thr221 the chain carries Phosphothreonine. Phosphoserine is present on residues Ser227, Ser230, and Ser242. Basic and acidic residues predominate over residues 238–250 (RSRDSDESGDKTT). Polar residues-rich tracts occupy residues 277 to 287 (SVLSSGYQKTP) and 300 to 313 (RMQT…SIYG). Ser320 carries the phosphoserine modification. The tract at residues 322–341 (LKSELGNQSPSTSSQQVTGQ) is disordered. Lys323 is covalently cross-linked (Glycyl lysine isopeptide (Lys-Gly) (interchain with G-Cter in SUMO2)). Over residues 326–341 (LGNQSPSTSSQQVTGQ) the composition is skewed to polar residues. Ser330 carries the post-translational modification Phosphoserine. Residues 352–372 (WWWLLPLIAALASGSFWFFST) form a helical membrane-spanning segment. An interaction with TOR1A region spans residues 371 to 598 (STPEVETTAV…ENALKRGICL (228 aa)). The Perinuclear space portion of the chain corresponds to 373–598 (PEVETTAVQE…ENALKRGICL (226 aa)). Positions 374–450 (EVETTAVQEF…SEQIADAYSS (77 aa)) form a coiled coil. N-linked (GlcNAc...) asparagine glycosylation occurs at Asn414.

Belongs to the TOR1AIP family. In terms of assembly, interacts with ATP1B4. Interacts with TOR1A (ATP-bound). Interacts with TOR1B, TOR2A and TOR3A.

It localises to the nucleus inner membrane. Required for nuclear membrane integrity. Induces TOR1A and TOR1B ATPase activity and is required for their location on the nuclear membrane. Binds to A- and B-type lamins. Possible role in membrane attachment and assembly of the nuclear lamina. In Pongo abelii (Sumatran orangutan), this protein is Torsin-1A-interacting protein 1 (TOR1AIP1).